A 122-amino-acid chain; its full sequence is Large ribosomal subunit protein uL18 (122 aa).

Over residues 1-21 (MSKLSRKQQTQKRHRRLRRHL) the composition is skewed to basic residues. The tract at residues 1–26 (MSKLSRKQQTQKRHRRLRRHLTGTSD) is disordered.

It belongs to the universal ribosomal protein uL18 family. Part of the 50S ribosomal subunit; part of the 5S rRNA/L5/L18/L25 subcomplex. Contacts the 5S and 23S rRNAs.

This is one of the proteins that bind and probably mediate the attachment of the 5S RNA into the large ribosomal subunit, where it forms part of the central protuberance. The protein is Large ribosomal subunit protein uL18 of Parasynechococcus marenigrum (strain WH8102).